A 359-amino-acid chain; its full sequence is Fructose-bisphosphate aldolase (359 aa).

Thr-11 is modified (phosphothreonine). Residue Lys-27 forms a Glycyl lysine isopeptide (Lys-Gly) (interchain with G-Cter in ubiquitin) linkage. 2 positions are modified to phosphoserine: Ser-56 and Ser-63. A D-glyceraldehyde 3-phosphate-binding site is contributed by Ser-63. Lys-73 participates in a covalent cross-link: Glycyl lysine isopeptide (Lys-Gly) (interchain with G-Cter in ubiquitin). Ser-76 and Ser-83 each carry phosphoserine. Lys-85 is covalently cross-linked (Glycyl lysine isopeptide (Lys-Gly) (interchain with G-Cter in ubiquitin)). Residue Ser-96 is modified to Phosphoserine. Asp-110 functions as the Proton donor in the catalytic mechanism. The Zn(2+) site is built by His-111 and Asp-145. Ser-147 is subject to Phosphoserine. Thr-150 is modified (phosphothreonine). Glu-175 is a binding site for Zn(2+). Thr-179 is subject to Phosphothreonine. His-227 provides a ligand contact to Zn(2+). Gly-228 contributes to the dihydroxyacetone phosphate binding site. Residue His-265 coordinates Zn(2+). Residues 266-268 (GGS) and 287-290 (NLDT) each bind dihydroxyacetone phosphate. At Ser-268 the chain carries Phosphoserine. At Thr-290 the chain carries Phosphothreonine. Residue Lys-308 forms a Glycyl lysine isopeptide (Lys-Gly) (interchain with G-Cter in ubiquitin) linkage. Residue Tyr-310 is modified to Phosphotyrosine. Residue Ser-313 is modified to Phosphoserine.

Belongs to the class II fructose-bisphosphate aldolase family. Homodimer. Zn(2+) serves as cofactor.

The catalysed reaction is beta-D-fructose 1,6-bisphosphate = D-glyceraldehyde 3-phosphate + dihydroxyacetone phosphate. It functions in the pathway carbohydrate degradation; glycolysis; D-glyceraldehyde 3-phosphate and glycerone phosphate from D-glucose: step 4/4. Catalyzes the aldol condensation of dihydroxyacetone phosphate (DHAP or glycerone-phosphate) with glyceraldehyde 3-phosphate (G3P) to form fructose 1,6-bisphosphate (FBP) in gluconeogenesis and the reverse reaction in glycolysis. This Saccharomyces cerevisiae (strain ATCC 204508 / S288c) (Baker's yeast) protein is Fructose-bisphosphate aldolase (FBA1).